A 624-amino-acid polypeptide reads, in one-letter code: Chaperone protein HtpG (624 aa).

The a; substrate-binding stretch occupies residues 1–336 (MKGQETRGFQ…SNDLPLNVSR (336 aa)). A b region spans residues 337 to 552 (EILQDSSITR…NDEMSTQMAK (216 aa)). Residues 553–624 (LFAAAGQAVP…IRRMNQLLVS (72 aa)) are c.

The protein belongs to the heat shock protein 90 family. Homodimer.

Its subcellular location is the cytoplasm. In terms of biological role, molecular chaperone. Has ATPase activity. This is Chaperone protein HtpG from Cronobacter sakazakii (strain ATCC BAA-894) (Enterobacter sakazakii).